The chain runs to 310 residues: Methionyl-tRNA formyltransferase (310 aa).

110–113 (SLLP) is a (6S)-5,6,7,8-tetrahydrofolate binding site.

It belongs to the Fmt family.

It catalyses the reaction L-methionyl-tRNA(fMet) + (6R)-10-formyltetrahydrofolate = N-formyl-L-methionyl-tRNA(fMet) + (6S)-5,6,7,8-tetrahydrofolate + H(+). Functionally, attaches a formyl group to the free amino group of methionyl-tRNA(fMet). The formyl group appears to play a dual role in the initiator identity of N-formylmethionyl-tRNA by promoting its recognition by IF2 and preventing the misappropriation of this tRNA by the elongation apparatus. In Streptomyces coelicolor (strain ATCC BAA-471 / A3(2) / M145), this protein is Methionyl-tRNA formyltransferase.